We begin with the raw amino-acid sequence, 515 residues long: Pescadillo homolog (515 aa).

Positions 270 to 327 form a coiled coil; sequence EVLAALNHTLKIIQTQEEDLEVDEFPIDPNSEDAEAIQAQKEEETKLERLKNLFSECK. Positions 318–411 constitute a BRCT domain; the sequence is RLKNLFSECK…KLLPVEEYFP (94 aa). The disordered stretch occupies residues 477-515; sequence RLYEKIMHSKKKKRSEVRKLESKRKVHDEEKAKKKLKSS. Residues 484-501 show a composition bias toward basic residues; that stretch reads HSKKKKRSEVRKLESKRK.

This sequence belongs to the pescadillo family.

It is found in the nucleus. The protein resides in the nucleolus. The protein localises to the nucleoplasm. In terms of biological role, required for maturation of ribosomal RNAs and formation of the large ribosomal subunit. This is Pescadillo homolog from Nematostella vectensis (Starlet sea anemone).